Here is a 1555-residue protein sequence, read N- to C-terminus: Protein TASOR (1555 aa).

5 disordered regions span residues M1 to A74, Q645 to T711, Q744 to Q773, A870 to S911, and N1390 to D1462. Residues V35–S47 are compositionally biased toward polar residues. The segment covering R61 to D71 has biased composition (basic residues). Residues D667–E688 are compositionally biased toward basic and acidic residues. Polar residues-rich tracts occupy residues S692–G702 and Q744–A761. The span at P888–C904 shows a compositional bias: basic and acidic residues. Acidic residues predominate over residues S1402 to P1417. The segment covering E1448–T1458 has biased composition (polar residues).

Belongs to the TASOR family. As to quaternary structure, component of the HUSH complex.

The protein resides in the nucleus. It localises to the chromosome. Component of the HUSH complex, a multiprotein complex that mediates epigenetic repression. The HUSH complex is recruited to genomic loci rich in H3K9me3 and is probably required to maintain transcriptional silencing by promoting further deposition of H3K9me3. The polypeptide is Protein TASOR (Xenopus laevis (African clawed frog)).